The sequence spans 447 residues: MPLDEFEFSVLKTIQTHHLIFPGHKVLVALSGGMDSMSLLNILLKLRQKLNCEIFAAHLNHMIRENAIRDEQFVYSYCKKAGVKIFVERFDVPKFCADRKIGIEEGARAARYTFLNRIAHENGIDLIALAHNLNDLVETILYRIVRGTGLSGIVCMKLKDENKIRPLLYFKREQIEAYIKRNNIPYVQDETNFNLKYSRNYIRHRIVPALKLLNSDLENAFSQVHFSGMMLENHVKRLIKKYSERIFRCGKRIIFDSKDMDEFEIIELVKYCAGQMNVDLNYRQIQLVVSKLNENSWSIDLSEDIAIKKGFDFFSIEKKCKFMNILKVGKPGVYKFNDWTFELSSEVKSNEYVFIHDQGGVCIRKRKAGEKIAGVKMKDMMIDSKIPAFLRDEMPVVCTIDRIIWVPYVYVDRCFKERKEDSLVLNLLQNPYSCILELRKDERRKMV.

31–36 (SGGMDS) provides a ligand contact to ATP.

This sequence belongs to the tRNA(Ile)-lysidine synthase family.

The protein localises to the cytoplasm. The enzyme catalyses cytidine(34) in tRNA(Ile2) + L-lysine + ATP = lysidine(34) in tRNA(Ile2) + AMP + diphosphate + H(+). Its function is as follows. Ligates lysine onto the cytidine present at position 34 of the AUA codon-specific tRNA(Ile) that contains the anticodon CAU, in an ATP-dependent manner. Cytidine is converted to lysidine, thus changing the amino acid specificity of the tRNA from methionine to isoleucine. The protein is tRNA(Ile)-lysidine synthase of Pseudothermotoga lettingae (strain ATCC BAA-301 / DSM 14385 / NBRC 107922 / TMO) (Thermotoga lettingae).